The primary structure comprises 462 residues: Integrator complex subunit 12 (462 aa).

The segment at 42–129 (GIDSSYRPSQ…LEKPETQSSP (88 aa)) is disordered. Residues 59-86 (ISSTKNISIKQEPKISSSLPSGNNNGKV) show a composition bias toward polar residues. K68 participates in a covalent cross-link: Glycyl lysine isopeptide (Lys-Gly) (interchain with G-Cter in SUMO2). The span at 88 to 124 (TTEKVKKEAEKRPADKMKSDITEGVDIPKKPRLEKPE) shows a compositional bias: basic and acidic residues. Position 128 is a phosphoserine (S128). The PHD-type zinc finger occupies 159–215 (GLACVVCRQMMVASGNQLVECQECHNLYHRDCHKPQVTDKEANDPRLVWYCARCTRQ). K254 participates in a covalent cross-link: Glycyl lysine isopeptide (Lys-Gly) (interchain with G-Cter in SUMO2). Residues 301–328 (SSAGPSTAKLSSTTQNSTGKPATSSANQ) are compositionally biased toward polar residues. Residues 301–462 (SSAGPSTAKL…KKAAQKKLKK (162 aa)) form a disordered region. Composition is skewed to low complexity over residues 347 to 358 (KIGSNNSTTPTV) and 396 to 437 (GNSS…GPTS). Positions 449-462 (QMVKKKAAQKKLKK) are enriched in basic residues.

Belongs to the Integrator subunit 12 family. As to quaternary structure, component of the Integrator complex, composed of core subunits INTS1, INTS2, INTS3, INTS4, INTS5, INTS6, INTS7, INTS8, INTS9/RC74, INTS10, INTS11/CPSF3L, INTS12, INTS13, INTS14 and INTS15. The core complex associates with protein phosphatase 2A subunits PPP2CA and PPP2R1A, to form the Integrator-PP2A (INTAC) complex. Post-translationally, dephosphorylated at Ser-128 by the PNUTS-PP1 complex, promoting RNA polymerase II transcription pause-release.

Its subcellular location is the nucleus. Component of the integrator complex, a multiprotein complex that terminates RNA polymerase II (Pol II) transcription in the promoter-proximal region of genes. The integrator complex provides a quality checkpoint during transcription elongation by driving premature transcription termination of transcripts that are unfavorably configured for transcriptional elongation: the complex terminates transcription by (1) catalyzing dephosphorylation of the C-terminal domain (CTD) of Pol II subunit POLR2A/RPB1 and SUPT5H/SPT5, (2) degrading the exiting nascent RNA transcript via endonuclease activity and (3) promoting the release of Pol II from bound DNA. The integrator complex is also involved in terminating the synthesis of non-coding Pol II transcripts, such as enhancer RNAs (eRNAs), small nuclear RNAs (snRNAs), telomerase RNAs and long non-coding RNAs (lncRNAs). Mediates recruitment of cytoplasmic dynein to the nuclear envelope, probably as component of the integrator complex. This Macaca fascicularis (Crab-eating macaque) protein is Integrator complex subunit 12 (INTS12).